The following is a 444-amino-acid chain: Probable kynurenine--oxoglutarate transaminase BNA3 (444 aa).

Lys-271 carries the post-translational modification N6-(pyridoxal phosphate)lysine.

Belongs to the class-I pyridoxal-phosphate-dependent aminotransferase family. As to quaternary structure, homodimer. The cofactor is pyridoxal 5'-phosphate.

It localises to the cytoplasm. The protein resides in the mitochondrion. The enzyme catalyses L-kynurenine + 2-oxoglutarate = kynurenate + L-glutamate + H2O. It participates in amino-acid degradation; L-kynurenine degradation; kynurenate from L-kynurenine: step 1/2. Its function is as follows. Catalyzes the irreversible transamination of the L-tryptophan metabolite L-kynurenine to form kynurenic acid (KA). The protein is Probable kynurenine--oxoglutarate transaminase BNA3 (BNA3) of Saccharomyces cerevisiae (strain ATCC 204508 / S288c) (Baker's yeast).